An 887-amino-acid polypeptide reads, in one-letter code: Alanine--tRNA ligase (887 aa).

Residues His-564, His-568, Cys-676, and His-680 each coordinate Zn(2+). Positions 854–873 are disordered; it reads GQGGGGRPDMAQSGGPKGNK.

Belongs to the class-II aminoacyl-tRNA synthetase family. Zn(2+) serves as cofactor.

The protein localises to the cytoplasm. It catalyses the reaction tRNA(Ala) + L-alanine + ATP = L-alanyl-tRNA(Ala) + AMP + diphosphate. Catalyzes the attachment of alanine to tRNA(Ala) in a two-step reaction: alanine is first activated by ATP to form Ala-AMP and then transferred to the acceptor end of tRNA(Ala). Also edits incorrectly charged Ser-tRNA(Ala) and Gly-tRNA(Ala) via its editing domain. This chain is Alanine--tRNA ligase, found in Bartonella henselae (strain ATCC 49882 / DSM 28221 / CCUG 30454 / Houston 1) (Rochalimaea henselae).